The chain runs to 465 residues: GTPase Der (465 aa).

2 EngA-type G domains span residues 3–166 and 184–358; these read FLVA…LNEY and IHFS…ACAN. Residues 9 to 16, 56 to 60, 118 to 121, 190 to 197, 237 to 241, and 302 to 305 contribute to the GTP site; these read GRANVGKS, DTGGI, NKVD, GRPNVGKS, DTAGV, and NKWD. The KH-like domain maps to 359-443; the sequence is KKITTADATC…PIVFEFKQSE (85 aa). Residues 446-465 form a disordered region; it reads FADRKNKRSKDEGSKSKKVK.

The protein belongs to the TRAFAC class TrmE-Era-EngA-EngB-Septin-like GTPase superfamily. EngA (Der) GTPase family. In terms of assembly, associates with the 50S ribosomal subunit.

GTPase that plays an essential role in the late steps of ribosome biogenesis. The chain is GTPase Der from Francisella tularensis subsp. mediasiatica (strain FSC147).